A 118-amino-acid chain; its full sequence is MEQQQQQQQQQQQLRNLRDFLLVYNRMTELCFQRCVPSLHHRALDAEEEACLHSCAGKLIHSNHRLMAAYVQLMPALVQRRMADYEAASAVPHATAEQLETSPSRSLPSGNLGKGGAG.

The Twin CX3C motif motif lies at 31–55 (CFQRCVPSLHHRALDAEEEACLHSC). 2 disulfides stabilise this stretch: C31/C55 and C35/C51. A disordered region spans residues 89–118 (SAVPHATAEQLETSPSRSLPSGNLGKGGAG). Polar residues predominate over residues 98–109 (QLETSPSRSLPS).

This sequence belongs to the small Tim family. As to quaternary structure, component of the TIM22 complex, which core is composed of TIMM22, associated with TIMM10 (TIMM10A and/or TIMM10B), TIMM9, AGK and TIMM29.

It localises to the mitochondrion inner membrane. Its function is as follows. Component of the TIM22 complex, a complex that mediates the import and insertion of multi-pass transmembrane proteins into the mitochondrial inner membrane. The TIM22 complex forms a twin-pore translocase that uses the membrane potential as the external driving force. In the TIM22 complex, it may act as a docking point for the soluble 70 kDa complex that guides the target proteins in transit through the aqueous mitochondrial intermembrane space. The protein is Mitochondrial import inner membrane translocase subunit Tim10 B (TIMM10B) of Bos taurus (Bovine).